Here is a 362-residue protein sequence, read N- to C-terminus: UDP-N-acetylglucosamine--N-acetylmuramyl-(pentapeptide) pyrophosphoryl-undecaprenol N-acetylglucosamine transferase (362 aa).

Residues T14 to G16, N126, R166, S193, and Q294 each bind UDP-N-acetyl-alpha-D-glucosamine.

This sequence belongs to the glycosyltransferase 28 family. MurG subfamily.

The protein localises to the cell inner membrane. The enzyme catalyses di-trans,octa-cis-undecaprenyl diphospho-N-acetyl-alpha-D-muramoyl-L-alanyl-D-glutamyl-meso-2,6-diaminopimeloyl-D-alanyl-D-alanine + UDP-N-acetyl-alpha-D-glucosamine = di-trans,octa-cis-undecaprenyl diphospho-[N-acetyl-alpha-D-glucosaminyl-(1-&gt;4)]-N-acetyl-alpha-D-muramoyl-L-alanyl-D-glutamyl-meso-2,6-diaminopimeloyl-D-alanyl-D-alanine + UDP + H(+). The protein operates within cell wall biogenesis; peptidoglycan biosynthesis. Cell wall formation. Catalyzes the transfer of a GlcNAc subunit on undecaprenyl-pyrophosphoryl-MurNAc-pentapeptide (lipid intermediate I) to form undecaprenyl-pyrophosphoryl-MurNAc-(pentapeptide)GlcNAc (lipid intermediate II). This chain is UDP-N-acetylglucosamine--N-acetylmuramyl-(pentapeptide) pyrophosphoryl-undecaprenol N-acetylglucosamine transferase, found in Paracoccus denitrificans (strain Pd 1222).